We begin with the raw amino-acid sequence, 227 residues long: Esterase OVCA2 (227 aa).

Active-site charge relay system residues include S120, D180, and H207.

Belongs to the LovG family.

The enzyme catalyses a carboxylic ester + H2O = an alcohol + a carboxylate + H(+). Its function is as follows. Exhibits ester hydrolase activity with a strong preference for long-chain alkyl ester substrates and high selectivity against a variety of short, branched, and substituted esters. Is able to hydrolyze ester bonds within a wide range of p-nitrophenyl derivatives (C2-C14) in vitro, with a strong preference toward substrates of &gt;8 carbons. The sequence is that of Esterase OVCA2 (ovca2) from Danio rerio (Zebrafish).